A 215-amino-acid polypeptide reads, in one-letter code: MARKTKQEAQETRQHILDVALRLFSQQGVSSTSLGEIAKAAGVTRGAIYWHFKDKSDLFSEIWELSESNIGELELEYQAKFPGDPLSVLREILIHVLESTVTEERRRLLMEIIFHKCEFVGEMAVVQQAQRNLCLESYDRIEQTLKHCIEAKMLPADLMTRRAAIIMRGYISGLMENWLFAPQSFDLKKEARDYVAILLEMYLLCPTLRNPATNE.

One can recognise an HTH tetR-type domain in the interval 10 to 70; sequence QETRQHILDV…EIWELSESNI (61 aa). Residues 33-52 constitute a DNA-binding region (H-T-H motif); the sequence is SLGEIAKAAGVTRGAIYWHF.

Potential regulator protein for the acrAB genes. This Shigella flexneri protein is HTH-type transcriptional regulator AcrR (acrR).